Reading from the N-terminus, the 633-residue chain is CDK5 and ABL1 enzyme substrate 1 (633 aa).

Over residues 1–29 (MAAAAAAATTAACSSGSAGTDAAGASGLQ) the composition is skewed to low complexity. Residues 1–99 (MAAAAAAATT…EGGAAKPGAG (99 aa)) form a disordered region. The interaction with TDRD7 stretch occupies residues 1 to 109 (MAAAAAAATT…GACGARTRFS (109 aa)). The segment covering 51 to 61 (PPRKPRMDPRR) has biased composition (basic and acidic residues). Residues Ser-168 and Ser-287 each carry the phosphoserine modification. The interaction with CDK3 stretch occupies residues 179-492 (QWQPPRPAPL…TTVIDYVKPS (314 aa)). Ser-313 carries the post-translational modification Phosphoserine; by CDK2 and CDK3. Thr-415 carries the post-translational modification Phosphothreonine.

This sequence belongs to the cyclin family. As to quaternary structure, found in a complex with p53/TP53. Found in a number of complexes with CDK2, CDK3, CDK5, ABL1, TDRD7, CDK17, CCNA1, CCNE1 and TP73. Interacts with CDK2, CDK3, CDK5, ABL1 and TDRD7. Post-translationally, phosphorylated on Ser-313 by CCNE1/CDK3. Phosphorylated on serine/threonine residues by CDK5 and on tyrosine residues by ABL1. Also phosphorylated in vitro by CCNA1/CDK2, CCNE1/CDK2, CCNA1/CDK3 and CCNE1/CDK3. Expressed in breast, pancreas, colon, head and neck (at protein level). Strongly decreased in more than half of cases of atypical endometrial hyperplasia and in more than 90% of endometrial cancers.

It localises to the nucleus. Its subcellular location is the cytoplasm. Cyclin-dependent kinase binding protein. Enhances cyclin-dependent kinase tyrosine phosphorylation by nonreceptor tyrosine kinases, such as that of CDK5 by activated ABL1, which leads to increased CDK5 activity and is critical for neuronal development, and that of CDK2 by WEE1, which leads to decreased CDK2 activity and growth inhibition. Positively affects neuronal outgrowth. Plays a role as a regulator for p53/p73-induced cell death. In Homo sapiens (Human), this protein is CDK5 and ABL1 enzyme substrate 1 (CABLES1).